A 191-amino-acid chain; its full sequence is Ribonuclease HII (191 aa).

Residues 16 to 191 (INLIGIDEAG…KLHRKSFKLL (176 aa)) form the RNase H type-2 domain. Residues aspartate 22, glutamate 23, and aspartate 110 each contribute to the a divalent metal cation site.

Belongs to the RNase HII family. It depends on Mn(2+) as a cofactor. The cofactor is Mg(2+).

The protein localises to the cytoplasm. It catalyses the reaction Endonucleolytic cleavage to 5'-phosphomonoester.. In terms of biological role, endonuclease that specifically degrades the RNA of RNA-DNA hybrids. The protein is Ribonuclease HII (rnhB) of Campylobacter jejuni subsp. jejuni serotype O:2 (strain ATCC 700819 / NCTC 11168).